A 229-amino-acid chain; its full sequence is Large ribosomal subunit protein uL1 (229 aa).

The protein belongs to the universal ribosomal protein uL1 family. In terms of assembly, part of the 50S ribosomal subunit.

Binds directly to 23S rRNA. The L1 stalk is quite mobile in the ribosome, and is involved in E site tRNA release. Its function is as follows. Protein L1 is also a translational repressor protein, it controls the translation of the L11 operon by binding to its mRNA. The chain is Large ribosomal subunit protein uL1 from Flavobacterium johnsoniae (strain ATCC 17061 / DSM 2064 / JCM 8514 / BCRC 14874 / CCUG 350202 / NBRC 14942 / NCIMB 11054 / UW101) (Cytophaga johnsonae).